The chain runs to 297 residues: MHTFYGTGTALITPFKKDHSVDYDAFKNLIEFNISSGVDYIVVNGTTAESATTSKEEKAKLLEVALDVNNGRVPVMYGIGGNDTAEVIQRIGSADFKGVDALLSVCPYYNKPSQEGVFQHYKAIAEKCPVPVLAYNVPGRTGINISAKTSIRLSEVKNIFGIKEASGDLVQALEIIKNTPNEFLVISGDDLLAVPTISLGAVGAISVLSNTYPAKFSEMIKAAIQSRFQQATQILARFTEMNPLMYEEGNPVGVKSLLELMGICSSEVRLPLVKASGELIHKIEQAHVKITREYANH.

Pyruvate is bound at residue threonine 47. Residue tyrosine 135 is the Proton donor/acceptor of the active site. Lysine 163 serves as the catalytic Schiff-base intermediate with substrate. Isoleucine 205 is a binding site for pyruvate.

The protein belongs to the DapA family. In terms of assembly, homotetramer; dimer of dimers.

It is found in the cytoplasm. It carries out the reaction L-aspartate 4-semialdehyde + pyruvate = (2S,4S)-4-hydroxy-2,3,4,5-tetrahydrodipicolinate + H2O + H(+). It functions in the pathway amino-acid biosynthesis; L-lysine biosynthesis via DAP pathway; (S)-tetrahydrodipicolinate from L-aspartate: step 3/4. Catalyzes the condensation of (S)-aspartate-beta-semialdehyde [(S)-ASA] and pyruvate to 4-hydroxy-tetrahydrodipicolinate (HTPA). This chain is 4-hydroxy-tetrahydrodipicolinate synthase, found in Cytophaga hutchinsonii (strain ATCC 33406 / DSM 1761 / CIP 103989 / NBRC 15051 / NCIMB 9469 / D465).